Reading from the N-terminus, the 507-residue chain is ATP synthase subunit alpha, plastid (507 aa).

170-177 (GDRQTGKT) is an ATP binding site.

The protein belongs to the ATPase alpha/beta chains family. In terms of assembly, F-type ATPases have 2 components, CF(1) - the catalytic core - and CF(0) - the membrane proton channel. CF(1) has five subunits: alpha(3), beta(3), gamma(1), delta(1), epsilon(1). CF(0) has four main subunits: a, b, b' and c.

It localises to the plastid membrane. The enzyme catalyses ATP + H2O + 4 H(+)(in) = ADP + phosphate + 5 H(+)(out). Functionally, produces ATP from ADP in the presence of a proton gradient across the membrane. The alpha chain is a regulatory subunit. This chain is ATP synthase subunit alpha, plastid, found in Cuscuta gronovii (Common dodder).